A 539-amino-acid polypeptide reads, in one-letter code: MAKDLKFSEDARQAMLRGVDKLANAVKVTIGPKGRNVVLDKEYVAPLITNDGVTIAKEIELEDPYENMGAKLVQEVANKTNEIAGDGTTTATVLAQAMIQEGLKNVTSGANPVGLREGIDKAVRVAVQALHDISQKVENKNEIAQVGAISAADEEIGKYISEAMDKVGNDGVITIEESNGLDTELEVVEGMQFDRGYQSPYMVTDSDKMIAELERPYILVTDKKISSFQDILPLLEQVVQSSRPILIVADEVEGDALTNIVLNRMRGTFTAVAVKAPGFGDRRKAMLEDLAILTGATVITDDLGLELKDASIDMLGSANKVEVTKDNTTVVDGDGDDNSIDARVSQIKAQIEETDSDFDREKLQERLAKLAGGVAVIKVGAASETELKERKLRIEDALNSTRAAVEEGIVAGGGTALVNIYNKVDEIEAEGDVATGVNIVLKALSAPVRQIAENAGLEGSVIVERLKHADAGVGFNAATNEWVNMLEEGIVDPTKVTRSALQHAASVAAMFLTTEAVVATIPEPDNNDNPGMGGMPGMM.

ATP is bound by residues 29–32 (TIGP), 86–90 (DGTTT), glycine 413, 476–478 (NAA), and aspartate 492.

It belongs to the chaperonin (HSP60) family. As to quaternary structure, forms a cylinder of 14 subunits composed of two heptameric rings stacked back-to-back. Interacts with the co-chaperonin GroES.

The protein resides in the cytoplasm. It carries out the reaction ATP + H2O + a folded polypeptide = ADP + phosphate + an unfolded polypeptide.. Its function is as follows. Together with its co-chaperonin GroES, plays an essential role in assisting protein folding. The GroEL-GroES system forms a nano-cage that allows encapsulation of the non-native substrate proteins and provides a physical environment optimized to promote and accelerate protein folding. The sequence is that of Chaperonin GroEL from Staphylococcus haemolyticus (strain JCSC1435).